The following is a 107-amino-acid chain: UPF0145 protein YbjQ (107 aa).

This sequence belongs to the UPF0145 family.

The chain is UPF0145 protein YbjQ from Escherichia coli O139:H28 (strain E24377A / ETEC).